Consider the following 125-residue polypeptide: Large ribosomal subunit protein bL12 (125 aa).

The protein belongs to the bacterial ribosomal protein bL12 family. Homodimer. Part of the ribosomal stalk of the 50S ribosomal subunit. Forms a multimeric L10(L12)X complex, where L10 forms an elongated spine to which 2 to 4 L12 dimers bind in a sequential fashion. Binds GTP-bound translation factors.

In terms of biological role, forms part of the ribosomal stalk which helps the ribosome interact with GTP-bound translation factors. Is thus essential for accurate translation. The sequence is that of Large ribosomal subunit protein bL12 from Rickettsia conorii (strain ATCC VR-613 / Malish 7).